Reading from the N-terminus, the 430-residue chain is Mitochondrial distribution and morphology protein 10 (430 aa).

The segment covering 215–234 has biased composition (polar residues); the sequence is SSSAMNPPSGTSASETNGSG. Disordered stretches follow at residues 215–237 and 339–393; these read SSSA…GPSV and LGAN…GPKE.

Belongs to the MDM10 family. In terms of assembly, component of the ER-mitochondria encounter structure (ERMES) or MDM complex, composed of MMM1, MDM10, MDM12 and MDM34. Associates with the mitochondrial outer membrane sorting assembly machinery SAM(core) complex.

The protein localises to the mitochondrion outer membrane. Functionally, component of the ERMES/MDM complex, which serves as a molecular tether to connect the endoplasmic reticulum and mitochondria. Components of this complex are involved in the control of mitochondrial shape and protein biogenesis and may function in phospholipid exchange. MDM10 is involved in the late assembly steps of the general translocase of the mitochondrial outer membrane (TOM complex). Functions in the TOM40-specific route of the assembly of outer membrane beta-barrel proteins, including the association of TOM40 with the receptor TOM22 and small TOM proteins. Can associate with the SAM(core) complex as well as the MDM12-MMM1 complex, both involved in late steps of the major beta-barrel assembly pathway, that is responsible for biogenesis of all outer membrane beta-barrel proteins. May act as a switch that shuttles between both complexes and channels precursor proteins into the TOM40-specific pathway. Plays a role in mitochondrial morphology and in the inheritance of mitochondria. The chain is Mitochondrial distribution and morphology protein 10 from Chaetomium globosum (strain ATCC 6205 / CBS 148.51 / DSM 1962 / NBRC 6347 / NRRL 1970) (Soil fungus).